Consider the following 793-residue polypeptide: Kinesin-like protein KIN-14C (793 aa).

Residues 1-43 form a disordered region; sequence MASRNQNRPPRSPNAKKEGLGGISFDKRRKVETQGGTGRRQAF. Positions 1 to 69 are globular; it reads MASRNQNRPP…IEECGKVDFT (69 aa). Over residues 15–32 the composition is skewed to basic and acidic residues; sequence AKKEGLGGISFDKRRKVE. Positions 120-375 form a coiled coil; the sequence is KENLKVSLES…EQQLAIANER (256 aa). A Kinesin motor domain is found at 431 to 772; sequence NIRVFCRVRP…LRFAARVNAC (342 aa). 516 to 523 serves as a coordination point for ATP; the sequence is GQTGSGKT.

The protein belongs to the TRAFAC class myosin-kinesin ATPase superfamily. Kinesin family. KIN-14 subfamily.

The protein localises to the cytoplasm. The protein resides in the cytoskeleton. It localises to the spindle. Its subcellular location is the phragmoplast. It is found in the chromosome. The protein localises to the centromere. The protein resides in the kinetochore. Functionally, kinesin that supports microtubule movement in an ATP-dependent manner and has a minus-end directed polarity. Plays a crucial role in spindle morphogenesis in male meiosis. In mitosis, is required for normal microtubule accumulation at the spindle poles during prophase and may play a role in spindle assembly during prometaphase. The protein is Kinesin-like protein KIN-14C of Arabidopsis thaliana (Mouse-ear cress).